The sequence spans 165 residues: IQSTSMDQGSLSEDSMNSFIRTFIQAGIWKNKVPKQAARTKDGTQTTAKKTEAEPEATANKDFQLGFQPVVSVDAELLRQQRRFSSPRVLLSENTPLEPPPLYLMEEPMVLNRTSRRKRFAEGKSHRGEYSVCDSESRWVTDKSSAVDIRGHQVTVLGEIRMGPS.

Positions 1–3 (IQS) are cleaved as a signal peptide. Positions 4–119 (TSMDQGSLSE…VLNRTSRRKR (116 aa)) are excised as a propeptide. The interval 32 to 61 (KVPKQAARTKDGTQTTAKKTEAEPEATANK) is disordered. The N-linked (GlcNAc...) asparagine glycan is linked to N112.

It belongs to the NGF-beta family.

The protein localises to the secreted. Its function is as follows. Seems to promote the survival of visceral and proprioceptive sensory neurons. The polypeptide is Neurotrophin-3 (NTF3) (Xenopeltis unicolor (Sunbeam snake)).